We begin with the raw amino-acid sequence, 404 residues long: MEEKGEISPSGVVTVKGDEALVPRTEFQQNPSFLQFVSPTTVVTPLPPPPAPSSAPVPTTVTPGSATASTGSDPTKKKRGRPRKYAPDGSLNPRFLRPTLSPTPISSSIPLSGDYQWKRGKAQQQHQPLEFVKKSHKFEYGSPAPTPPLPGLSCYVGANFTTHQFTVNGGEDVTMKVMPYSQQGSRAICILSATGSISNVTLGQPTNAGGTLTYEGRFEILSLSGSFMPTENGGTKGRAGGMSISLAGPNGNIFGGGLAGMLIAAGPVQVVMGSFIVMHQAEQNQKKKPRVMEAFAPPQPQAPPQLQQQQPPTFTITTVNSTSPSVNTVEEQKPQAYGGGIVRPMAQMPSSFQNDNSTMNNFTPAYHGYGNMNTGTTHKEEHEDEDGGDDDDDSGDTRSQSHSG.

The interval Thr40 to Ser112 is disordered. Residues Pro45–Ala55 show a composition bias toward pro residues. The span at Pro56–Thr70 shows a compositional bias: low complexity. The Bipartite nuclear localization signal signature appears at Lys76–Lys84. The segment at residues Lys76–Asp88 is a DNA-binding region (a.T hook). The segment covering Pro98–Ser112 has biased composition (low complexity). One can recognise a PPC domain in the interval Gly157–Gln299. Residues Ala365–Gly404 form a disordered region. The span at His382–Ser394 shows a compositional bias: acidic residues.

The protein localises to the nucleus. In terms of biological role, transcription factor that specifically binds AT-rich DNA sequences related to the nuclear matrix attachment regions (MARs). This chain is AT-hook motif nuclear-localized protein 6, found in Arabidopsis thaliana (Mouse-ear cress).